A 196-amino-acid chain; its full sequence is Peptidyl-tRNA hydrolase (196 aa).

Y17 provides a ligand contact to tRNA. The Proton acceptor role is filled by H22. F68, N70, and N116 together coordinate tRNA.

This sequence belongs to the PTH family. As to quaternary structure, monomer.

It localises to the cytoplasm. The catalysed reaction is an N-acyl-L-alpha-aminoacyl-tRNA + H2O = an N-acyl-L-amino acid + a tRNA + H(+). Functionally, hydrolyzes ribosome-free peptidyl-tRNAs (with 1 or more amino acids incorporated), which drop off the ribosome during protein synthesis, or as a result of ribosome stalling. Its function is as follows. Catalyzes the release of premature peptidyl moieties from peptidyl-tRNA molecules trapped in stalled 50S ribosomal subunits, and thus maintains levels of free tRNAs and 50S ribosomes. The polypeptide is Peptidyl-tRNA hydrolase (Yersinia pestis bv. Antiqua (strain Antiqua)).